The primary structure comprises 131 residues: Maturin (131 aa).

Tyr-34 bears the Phosphotyrosine mark. A compositionally biased stretch (acidic residues) spans 107 to 120 (FEEYSADVEEEEPE). Residues 107–131 (FEEYSADVEEEEPEADHPQMGVSQQ) are disordered.

It belongs to the MTURN family. Post-translationally, phosphorylation at Tyr-34 is essential for its ability to promote megakaryocyte differentiation.

The protein resides in the cytoplasm. In terms of biological role, promotes megakaryocyte differentiation by enhancing ERK and JNK signaling as well as up-regulating RUNX1 and FLI1 expression. Represses NF-kappa-B transcriptional activity by inhibiting phosphorylation of RELA at 'Ser- 536'. May be involved in early neuronal development. This chain is Maturin (MTURN), found in Bos taurus (Bovine).